A 160-amino-acid chain; its full sequence is MAEKTYPMTKAEKEQLEKELEELKLVRRPEVVERIKIARSYGDLSENSEYDAAKDEQAFVEGQISTLETQIRFAEIIDSDAVAKDEVAIGKTVVVQEVGTTDKDTYHIVGSAGADIFSGKISNESPIAQALIGKKKGDIADIVSPATTYQVEIISVEKTK.

Residues 1–71 (MAEKTYPMTK…GQISTLETQI (71 aa)) adopt a coiled-coil conformation.

The protein belongs to the GreA/GreB family.

Its function is as follows. Necessary for efficient RNA polymerase transcription elongation past template-encoded arresting sites. The arresting sites in DNA have the property of trapping a certain fraction of elongating RNA polymerases that pass through, resulting in locked ternary complexes. Cleavage of the nascent transcript by cleavage factors such as GreA or GreB allows the resumption of elongation from the new 3'terminus. GreA releases sequences of 2 to 3 nucleotides. This is Transcription elongation factor GreA from Streptococcus uberis (strain ATCC BAA-854 / 0140J).